The chain runs to 204 residues: Synaptosomal-associated protein 25-A (204 aa).

The span at 1–11 (MAEDSDMRNEL) shows a compositional bias: basic and acidic residues. Residues 1–25 (MAEDSDMRNELADMQQRADQLADES) are disordered. T-SNARE coiled-coil homology domains are found at residues 19 to 81 (DQLA…LNDL) and 138 to 200 (DARE…ATKM).

This sequence belongs to the SNAP-25 family. Expressed in several regions throughout the adult brain, including the mesencephalon.

The protein resides in the synapse. The protein localises to the synaptosome. It localises to the cell membrane. May play an important role in the synaptic function of specific neuronal systems. Associates with proteins involved in vesicle docking and membrane fusion. The polypeptide is Synaptosomal-associated protein 25-A (Danio rerio (Zebrafish)).